A 127-amino-acid polypeptide reads, in one-letter code: MFRTLMNAKIHRARVTEANLNYVGSITIDEDILDAVGMVPNEKVQIVNNNNGARFETYIIPGERGSGVFCLNGAAARLVQKDDIIIVISYVLVPEEKLTSHRPKIAIMDEHNRIKELIVQEPAATVL.

Residue S25 is the Schiff-base intermediate with substrate; via pyruvic acid of the active site. S25 carries the post-translational modification Pyruvic acid (Ser). Residue T57 coordinates substrate. Residue Y58 is the Proton donor of the active site. 73-75 (GAA) contributes to the substrate binding site.

The protein belongs to the PanD family. Heterooctamer of four alpha and four beta subunits. Pyruvate is required as a cofactor. Post-translationally, is synthesized initially as an inactive proenzyme, which is activated by self-cleavage at a specific serine bond to produce a beta-subunit with a hydroxyl group at its C-terminus and an alpha-subunit with a pyruvoyl group at its N-terminus.

It is found in the cytoplasm. It catalyses the reaction L-aspartate + H(+) = beta-alanine + CO2. It participates in cofactor biosynthesis; (R)-pantothenate biosynthesis; beta-alanine from L-aspartate: step 1/1. Catalyzes the pyruvoyl-dependent decarboxylation of aspartate to produce beta-alanine. This is Aspartate 1-decarboxylase from Anoxybacillus flavithermus (strain DSM 21510 / WK1).